Reading from the N-terminus, the 177-residue chain is Ribonuclease M5 (177 aa).

Residues 5–99 (KQIIIVEGKT…NKTSKKIGIA (95 aa)) form the Toprim domain. Mg(2+) is bound by residues Glu11, Asp59, and Asp61.

This sequence belongs to the ribonuclease M5 family. Mg(2+) serves as cofactor.

The protein resides in the cytoplasm. The enzyme catalyses Endonucleolytic cleavage of RNA, removing 21 and 42 nucleotides, respectively, from the 5'- and 3'-termini of a 5S-rRNA precursor.. Its function is as follows. Required for correct processing of both the 5' and 3' ends of 5S rRNA precursor. Cleaves both sides of a double-stranded region yielding mature 5S rRNA in one step. The protein is Ribonuclease M5 of Mycoplasma mycoides subsp. mycoides SC (strain CCUG 32753 / NCTC 10114 / PG1).